Here is a 579-residue protein sequence, read N- to C-terminus: Aspartate--tRNA(Asp/Asn) ligase (579 aa).

E171 contributes to the L-aspartate binding site. The aspartate stretch occupies residues 195 to 198; sequence QLFK. An L-aspartate-binding site is contributed by R217. ATP-binding positions include 217 to 219 and Q226; that span reads RDE. An L-aspartate-binding site is contributed by H444. E475 is an ATP binding site. An L-aspartate-binding site is contributed by R482. Position 527–530 (527–530) interacts with ATP; the sequence is GLDR.

It belongs to the class-II aminoacyl-tRNA synthetase family. Type 1 subfamily. In terms of assembly, homodimer.

Its subcellular location is the cytoplasm. The catalysed reaction is tRNA(Asx) + L-aspartate + ATP = L-aspartyl-tRNA(Asx) + AMP + diphosphate. Aspartyl-tRNA synthetase with relaxed tRNA specificity since it is able to aspartylate not only its cognate tRNA(Asp) but also tRNA(Asn). Reaction proceeds in two steps: L-aspartate is first activated by ATP to form Asp-AMP and then transferred to the acceptor end of tRNA(Asp/Asn). This chain is Aspartate--tRNA(Asp/Asn) ligase, found in Thermotoga neapolitana (strain ATCC 49049 / DSM 4359 / NBRC 107923 / NS-E).